A 485-amino-acid polypeptide reads, in one-letter code: tRNA sulfurtransferase (485 aa).

A THUMP domain is found at 61 to 165 (EELIALLQRI…DDKMMLVKAR (105 aa)). Residues 183–184 (LI), Lys-265, Gly-287, and Gln-296 each bind ATP. A disulfide bridge links Cys-344 with Cys-456. One can recognise a Rhodanese domain in the interval 404–483 (LSENEVILDI…FSNVRVFAKK (80 aa)). Cys-456 (cysteine persulfide intermediate) is an active-site residue.

It belongs to the ThiI family.

It is found in the cytoplasm. It catalyses the reaction [ThiI sulfur-carrier protein]-S-sulfanyl-L-cysteine + a uridine in tRNA + 2 reduced [2Fe-2S]-[ferredoxin] + ATP + H(+) = [ThiI sulfur-carrier protein]-L-cysteine + a 4-thiouridine in tRNA + 2 oxidized [2Fe-2S]-[ferredoxin] + AMP + diphosphate. It carries out the reaction [ThiS sulfur-carrier protein]-C-terminal Gly-Gly-AMP + S-sulfanyl-L-cysteinyl-[cysteine desulfurase] + AH2 = [ThiS sulfur-carrier protein]-C-terminal-Gly-aminoethanethioate + L-cysteinyl-[cysteine desulfurase] + A + AMP + 2 H(+). It functions in the pathway cofactor biosynthesis; thiamine diphosphate biosynthesis. In terms of biological role, catalyzes the ATP-dependent transfer of a sulfur to tRNA to produce 4-thiouridine in position 8 of tRNAs, which functions as a near-UV photosensor. Also catalyzes the transfer of sulfur to the sulfur carrier protein ThiS, forming ThiS-thiocarboxylate. This is a step in the synthesis of thiazole, in the thiamine biosynthesis pathway. The sulfur is donated as persulfide by IscS. In Haemophilus influenzae (strain PittEE), this protein is tRNA sulfurtransferase.